A 32-amino-acid chain; its full sequence is Photosystem I reaction center subunit XII (32 aa).

Residues 9 to 28 traverse the membrane as a helical segment; sequence VYIALVVALIPGLLAWRLAT.

This sequence belongs to the PsaM family.

The protein resides in the cellular thylakoid membrane. The protein is Photosystem I reaction center subunit XII of Nostoc sp. (strain PCC 7120 / SAG 25.82 / UTEX 2576).